A 669-amino-acid chain; its full sequence is uncharacterized protein (669 aa).

6 consecutive transmembrane segments (helical) span residues 39 to 61, 124 to 146, 153 to 175, 190 to 212, 221 to 243, and 263 to 285; these read LCPL…GTSW, ISLW…LISI, GIIY…YALG, GLAF…FFGV, FAPG…QTAL, and IAAG…IRYL. 2 RCK C-terminal domains span residues 316–397 and 398–483; these read AGSL…KLIG and KESD…LGGR. 5 consecutive transmembrane segments (helical) span residues 484–506, 516–538, 558–580, 585–607, and 645–667; these read PILN…GYIF, IPFA…YWRS, IGLN…ESFH, IWVA…VVGI, and VPYP…FAML.

This sequence belongs to the AAE transporter (TC 2.A.81) family.

The protein localises to the cell membrane. This is an uncharacterized protein from Desulfotalea psychrophila (strain LSv54 / DSM 12343).